We begin with the raw amino-acid sequence, 193 residues long: RNA polymerase sigma-H factor (193 aa).

Positions 49-62 match the Polymerase core binding motif; the sequence is DVAQEAFIKAYRAL. Residues 157 to 176 constitute a DNA-binding region (H-T-H motif); the sequence is YEDIATVMQCPVGTVRSRIF.

This sequence belongs to the sigma-70 factor family. ECF subfamily.

In terms of biological role, sigma factors are initiation factors that promote the attachment of RNA polymerase to specific initiation sites and are then released. This sigma factor regulates genes such as algD, involved in alginate biosynthesis. The sequence is that of RNA polymerase sigma-H factor (algU) from Pseudomonas aeruginosa (strain ATCC 15692 / DSM 22644 / CIP 104116 / JCM 14847 / LMG 12228 / 1C / PRS 101 / PAO1).